A 964-amino-acid polypeptide reads, in one-letter code: Iron-responsive element-binding protein 2 (964 aa).

The [4Fe-4S] cluster site is built by C513, C579, and C582.

Belongs to the aconitase/IPM isomerase family. Interacts with RBCK1 only in iron-rich conditions. Interacts (when associated with the 4Fe-4S) with FBXL5. Interacts with CIAO1 and CIAO2A. It depends on [4Fe-4S] cluster as a cofactor. Ubiquitinated and degraded by the proteasome in presence of high level of iron and oxygen. Ubiquitinated by a SCF complex containing FBXL5. Upon iron and oxygen depletion FBXL5 is degraded, preventing ubiquitination and allowing its RNA-binding activity.

The protein localises to the cytoplasm. RNA-binding protein that binds to iron-responsive elements (IRES), which are stem-loop structures found in the 5'-UTR of ferritin, and delta aminolevulinic acid synthase mRNAs, and in the 3'-UTR of transferrin receptor mRNA. Binding to the IRE element in ferritin results in the repression of its mRNA translation. Binding of the protein to the transferrin receptor mRNA inhibits the degradation of this otherwise rapidly degraded mRNA. In Sus scrofa (Pig), this protein is Iron-responsive element-binding protein 2 (IREB2).